A 147-amino-acid polypeptide reads, in one-letter code: DNA polymerase epsilon subunit 3 (147 aa).

Alanine 2 bears the N-acetylalanine mark. Phosphothreonine is present on threonine 83. The stretch at 85–146 forms a coiled coil; sequence LKEALEAYRR…EEQNEEEEVD (62 aa). A compositionally biased stretch (basic and acidic residues) spans 93-124; sequence RREQKGKKEASEQKKKDKDKKTDSEEQDKSRD. The disordered stretch occupies residues 93 to 147; it reads RREQKGKKEASEQKKKDKDKKTDSEEQDKSRDEDNDEDEERLEEEEQNEEEEVDN. A Phosphoserine modification is found at serine 122. A compositionally biased stretch (acidic residues) spans 125 to 147; the sequence is EDNDEDEERLEEEEQNEEEEVDN.

In terms of assembly, component of the DNA polymerase epsilon complex consisting of four subunits: the catalytic subunit POLE and the accessory subunits POLE2, POLE3 and POLE4. Interaction with POLE4 is a prerequisite for further binding with POLE and POLE2. Heterodimer with CHRAC1; binds to DNA. Component of the CHRAC ISWI chromatin remodeling complex at least composed of SMARCA5/SNF2H, BAZ1A/ACF1, CHRAC1 and POLE3; the complex preferentially binds DNA through the CHRAC1-POLE3 heterodimer and possesses ATP-dependent nucleosome-remodeling activity. Within the complex, the heterodimer with CHRAC1 interacts with SMARCA5/SNF2H; the interaction is direct and enhances nucleosome sliding activity by the SMARCA5/SNF2H and BAZ1A/ACF1 interaction. Within the complex, the heterodimer with CHRAC1 interacts with BAZ1A/ACF1; the interactions are direct.

The protein resides in the nucleus. Its function is as follows. Accessory component of the DNA polymerase epsilon complex. Participates in DNA repair and in chromosomal DNA replication. Forms a complex with CHRAC1 and binds naked DNA, which is then incorporated into chromatin, aided by the nucleosome-remodeling activity of ISWI/SNF2H and ACF1. Does not enhance nucleosome sliding activity of the ACF-5 ISWI chromatin remodeling complex. The sequence is that of DNA polymerase epsilon subunit 3 (POLE3) from Bos taurus (Bovine).